The primary structure comprises 293 residues: Phosphatidylserine decarboxylase proenzyme (293 aa).

Residues aspartate 90, histidine 147, and serine 254 each act as charge relay system; for autoendoproteolytic cleavage activity in the active site. Serine 254 functions as the Schiff-base intermediate with substrate; via pyruvic acid; for decarboxylase activity in the catalytic mechanism. Serine 254 bears the Pyruvic acid (Ser); by autocatalysis mark.

Belongs to the phosphatidylserine decarboxylase family. PSD-B subfamily. Prokaryotic type I sub-subfamily. In terms of assembly, heterodimer of a large membrane-associated beta subunit and a small pyruvoyl-containing alpha subunit. It depends on pyruvate as a cofactor. Post-translationally, is synthesized initially as an inactive proenzyme. Formation of the active enzyme involves a self-maturation process in which the active site pyruvoyl group is generated from an internal serine residue via an autocatalytic post-translational modification. Two non-identical subunits are generated from the proenzyme in this reaction, and the pyruvate is formed at the N-terminus of the alpha chain, which is derived from the carboxyl end of the proenzyme. The autoendoproteolytic cleavage occurs by a canonical serine protease mechanism, in which the side chain hydroxyl group of the serine supplies its oxygen atom to form the C-terminus of the beta chain, while the remainder of the serine residue undergoes an oxidative deamination to produce ammonia and the pyruvoyl prosthetic group on the alpha chain. During this reaction, the Ser that is part of the protease active site of the proenzyme becomes the pyruvoyl prosthetic group, which constitutes an essential element of the active site of the mature decarboxylase.

The protein localises to the cell membrane. The enzyme catalyses a 1,2-diacyl-sn-glycero-3-phospho-L-serine + H(+) = a 1,2-diacyl-sn-glycero-3-phosphoethanolamine + CO2. It participates in phospholipid metabolism; phosphatidylethanolamine biosynthesis; phosphatidylethanolamine from CDP-diacylglycerol: step 2/2. In terms of biological role, catalyzes the formation of phosphatidylethanolamine (PtdEtn) from phosphatidylserine (PtdSer). The polypeptide is Phosphatidylserine decarboxylase proenzyme (Yersinia enterocolitica serotype O:8 / biotype 1B (strain NCTC 13174 / 8081)).